Here is a 189-residue protein sequence, read N- to C-terminus: Ribosome maturation factor RimM (189 aa).

The region spanning 118–189 (SGEYYWDDLI…IILVDWDENF (72 aa)) is the PRC barrel domain.

This sequence belongs to the RimM family. Binds ribosomal protein uS19.

Its subcellular location is the cytoplasm. An accessory protein needed during the final step in the assembly of 30S ribosomal subunit, possibly for assembly of the head region. Essential for efficient processing of 16S rRNA. May be needed both before and after RbfA during the maturation of 16S rRNA. It has affinity for free ribosomal 30S subunits but not for 70S ribosomes. This chain is Ribosome maturation factor RimM, found in Ruthia magnifica subsp. Calyptogena magnifica.